The chain runs to 115 residues: MWYSDYHVWILPVHERVVRLGLTEKMQKNLGAILHVDLPSVGSLCKEGEVLVILESSKSAIEVLSPVSGEVIDINLDLVDNPQKINEAPEGEGWLAVVRLDQDWDPSNLSLMDEE.

A Lipoyl-binding domain is found at 17–99; the sequence is VVRLGLTEKM…EGEGWLAVVR (83 aa). Lysine 58 is subject to N6-lipoyllysine.

Belongs to the GcvH family. Requires (R)-lipoate as cofactor.

The sequence is that of Glycine cleavage system H-like protein from Chlamydia pneumoniae (Chlamydophila pneumoniae).